A 672-amino-acid polypeptide reads, in one-letter code: PHD finger protein MALE STERILITY 1 (672 aa).

The PHD-type zinc finger occupies 614–664; sequence RIECECGATEEDGERMVCCDICEVWQHTRCVGVQHNEEVPRIFLCQSCDQH.

In terms of tissue distribution, in closed flower buds, especially in anthers.

It is found in the nucleus. Functionally, transcriptional activator required for anther and post-meiotic pollen development and maturation. Seems to regulate inflorescence branching and floral development. May control tapetal development by directly regulating tapetal programmed cell death (PCD) and breakdown. Implicated in pollen cytosolic components and wall development (e.g. exine and intine formation). The protein is PHD finger protein MALE STERILITY 1 (MS1) of Arabidopsis thaliana (Mouse-ear cress).